The sequence spans 263 residues: Endolytic peptidoglycan transglycosylase RlpA (263 aa).

The first 16 residues, 1–16 (MNRIYLYLLIVLILAG), serve as a signal peptide directing secretion. Residue Cys-17 is the site of N-palmitoyl cysteine attachment. Cys-17 carries the S-diacylglycerol cysteine lipid modification. Residues 182–257 (KNNALEYVIQ…AGYDSAFIKT (76 aa)) form the SPOR domain.

It belongs to the RlpA family.

The protein resides in the cell membrane. Functionally, lytic transglycosylase with a strong preference for naked glycan strands that lack stem peptides. The protein is Endolytic peptidoglycan transglycosylase RlpA of Vibrio cholerae serotype O1 (strain ATCC 39315 / El Tor Inaba N16961).